The following is a 400-amino-acid chain: NADPH dehydrogenase 2 (400 aa).

Residues Thr38 and Gln115 each contribute to the FMN site. Substrate-binding residues include His192 and Asn195. The active-site Proton donor is Tyr197. Arg244 and Arg349 together coordinate FMN. The residue at position 353 (Ser353) is a Phosphoserine. Residue Tyr376 coordinates substrate. Position 379 is a phosphoserine (Ser379).

The protein belongs to the NADH:flavin oxidoreductase/NADH oxidase family. In terms of assembly, homodimer or heterodimer with OYE3. The cofactor is FMN.

It is found in the cytoplasm. The protein localises to the nucleus. The protein resides in the mitochondrion. The enzyme catalyses A + NADPH + H(+) = AH2 + NADP(+). Functionally, flavin-dependent enoate reductase that catalyzes the chemo- and stereoslective hydrogenation of electron-poor alkenes. The enzyme is reduced by NADPH, and oxygen, quinones, and alpha,beta-unsaturated aldehydes and ketones can act as electron acceptors to complete catalytic turnover. The physiological oxidant remains elusive. Has an antioxidant activity, reducing reactive oxygen species (ROS) levels when overexpressed. Formation of OYE2-OYE3 heterodimers contribute to the induction of programmed cell death upon oxidative stress. This Saccharomyces cerevisiae (strain ATCC 204508 / S288c) (Baker's yeast) protein is NADPH dehydrogenase 2.